The following is a 202-amino-acid chain: dITP/XTP pyrophosphatase (202 aa).

9–14 (TGNKGK) is a binding site for substrate. Catalysis depends on aspartate 73, which acts as the Proton acceptor. Mg(2+) is bound at residue aspartate 73. Substrate contacts are provided by residues serine 74, 158-161 (FGYD), lysine 181, and 186-187 (HR).

Belongs to the HAM1 NTPase family. As to quaternary structure, homodimer. It depends on Mg(2+) as a cofactor.

The enzyme catalyses XTP + H2O = XMP + diphosphate + H(+). The catalysed reaction is dITP + H2O = dIMP + diphosphate + H(+). It catalyses the reaction ITP + H2O = IMP + diphosphate + H(+). Functionally, pyrophosphatase that catalyzes the hydrolysis of nucleoside triphosphates to their monophosphate derivatives, with a high preference for the non-canonical purine nucleotides XTP (xanthosine triphosphate), dITP (deoxyinosine triphosphate) and ITP. Seems to function as a house-cleaning enzyme that removes non-canonical purine nucleotides from the nucleotide pool, thus preventing their incorporation into DNA/RNA and avoiding chromosomal lesions. This is dITP/XTP pyrophosphatase from Lactobacillus acidophilus (strain ATCC 700396 / NCK56 / N2 / NCFM).